Reading from the N-terminus, the 225-residue chain is Cell division protein SepF (225 aa).

Residues 22-116 (EYLDEPEPAR…TRGALAVDTR (95 aa)) form a disordered region. 2 stretches are compositionally biased toward basic and acidic residues: residues 28-54 (EPAR…RDFA) and 77-86 (RYDGPRHSSR).

It belongs to the SepF family. In terms of assembly, homodimer. Interacts with FtsZ.

The protein resides in the cytoplasm. In terms of biological role, cell division protein that is part of the divisome complex and is recruited early to the Z-ring. Probably stimulates Z-ring formation, perhaps through the cross-linking of FtsZ protofilaments. Its function overlaps with FtsA. The polypeptide is Cell division protein SepF (Rhodococcus jostii (strain RHA1)).